Reading from the N-terminus, the 404-residue chain is MRLFPKSDKLEHVCYDIRGPVHKEALRLEEEGNKILKLNIGNPAPFGFEAPDEILVDVLRNLPSAQGYCDSKGLYSARKAIVQYYQSKGILGATVNDVYIGNGVSELITMAMQALLNDGDEVLVPMPDYPLWTAAVTLSGGKAVHYLCDEDANWFPTIDDIKAKVNAKTKAIVIINPNNPTGAVYSKELLQEIVEIARQNNLIIFADEIYDKILYDGAVHHHIAALAPDLLTVTLNGLSKAYRVAGFRQGWMILNGPKHNAKGYIEGLDMLASMRLCANVPMQHAIQTALGGYQSINEFILPGGRLLEQRNKAYDLITQIPGITCVKPMGAMYMFPKIDVKKFNIHSDEKMVLDLLRQEKVLLVHGKGFNWHSPDHFRIVTLPYVNQLEEAITKLARFLSDYRQ.

Residues glycine 41 and asparagine 179 each contribute to the L-alanine site. Lysine 240 is modified (N6-(pyridoxal phosphate)lysine). Arginine 378 lines the L-alanine pocket.

This sequence belongs to the class-I pyridoxal-phosphate-dependent aminotransferase family. As to quaternary structure, homodimer. Pyridoxal 5'-phosphate is required as a cofactor.

The catalysed reaction is L-alanine + 2-oxoglutarate = pyruvate + L-glutamate. It participates in amino-acid biosynthesis; L-alanine biosynthesis. Involved in the biosynthesis of alanine. Catalyzes the transamination of pyruvate by glutamate, leading to the formation of L-alanine and 2-oxoglutarate. Is also able to catalyze the reverse reaction. The chain is Glutamate-pyruvate aminotransferase AlaA (alaA) from Haemophilus influenzae (strain ATCC 51907 / DSM 11121 / KW20 / Rd).